The primary structure comprises 331 residues: Ketol-acid reductoisomerase (NADP(+)) (331 aa).

In terms of domain architecture, KARI N-terminal Rossmann spans 2-182; it reads ARMYYDSDAN…GGTRAGILET (181 aa). NADP(+) contacts are provided by residues 25–28, serine 51, serine 53, and 83–86; these read YGSQ and DEVQ. The active site involves histidine 108. Glycine 134 provides a ligand contact to NADP(+). The region spanning 183-328 is the KARI C-terminal knotted domain; it reads TFREETETDL…KDLRAMFSWL (146 aa). Residues aspartate 191, glutamate 195, glutamate 227, and glutamate 231 each contribute to the Mg(2+) site. Residue serine 252 participates in substrate binding.

It belongs to the ketol-acid reductoisomerase family. Mg(2+) is required as a cofactor.

The enzyme catalyses (2R)-2,3-dihydroxy-3-methylbutanoate + NADP(+) = (2S)-2-acetolactate + NADPH + H(+). The catalysed reaction is (2R,3R)-2,3-dihydroxy-3-methylpentanoate + NADP(+) = (S)-2-ethyl-2-hydroxy-3-oxobutanoate + NADPH + H(+). The protein operates within amino-acid biosynthesis; L-isoleucine biosynthesis; L-isoleucine from 2-oxobutanoate: step 2/4. It participates in amino-acid biosynthesis; L-valine biosynthesis; L-valine from pyruvate: step 2/4. In terms of biological role, involved in the biosynthesis of branched-chain amino acids (BCAA). Catalyzes an alkyl-migration followed by a ketol-acid reduction of (S)-2-acetolactate (S2AL) to yield (R)-2,3-dihydroxy-isovalerate. In the isomerase reaction, S2AL is rearranged via a Mg-dependent methyl migration to produce 3-hydroxy-3-methyl-2-ketobutyrate (HMKB). In the reductase reaction, this 2-ketoacid undergoes a metal-dependent reduction by NADPH to yield (R)-2,3-dihydroxy-isovalerate. The polypeptide is Ketol-acid reductoisomerase (NADP(+)) (Trichodesmium erythraeum (strain IMS101)).